The chain runs to 164 residues: uncharacterized protein (164 aa).

The chain crosses the membrane as a helical span at residues 46 to 66; sequence FIRPNIYLIIFIIIVLLLLYY. Residues 72 to 137 are a coiled coil; that stretch reads KADKEKEKLE…YNLNKENLRE (66 aa). The segment covering 76–91 has biased composition (basic and acidic residues); sequence EKEKLEDTDKEFDKST. Positions 76–114 are disordered; it reads EKEKLEDTDKEFDKSTNNDTNSKKIYHRQKNSKTLNSSK.

It localises to the membrane. This is an uncharacterized protein from Acanthamoeba polyphaga mimivirus (APMV).